The chain runs to 314 residues: tRNA pseudouridine synthase B (314 aa).

Position 43 (His43) interacts with substrate. Asp48 functions as the Nucleophile in the catalytic mechanism. Substrate-binding residues include Tyr76, Tyr179, and Leu200.

It belongs to the pseudouridine synthase TruB family. Type 1 subfamily.

It carries out the reaction uridine(55) in tRNA = pseudouridine(55) in tRNA. In terms of biological role, responsible for synthesis of pseudouridine from uracil-55 in the psi GC loop of transfer RNAs. The protein is tRNA pseudouridine synthase B of Pectobacterium atrosepticum (strain SCRI 1043 / ATCC BAA-672) (Erwinia carotovora subsp. atroseptica).